We begin with the raw amino-acid sequence, 172 residues long: Glutamyl-tRNA(Gln) amidotransferase subunit C-3, mitochondrial (172 aa).

Residues 49 to 71 (KHPSKVPQRPNKSTIDGQSTPTR) form a disordered region. Over residues 58-71 (PNKSTIDGQSTPTR) the composition is skewed to polar residues.

It belongs to the GatC family. In terms of assembly, subunit of the heterotrimeric GatCAB amidotransferase (AdT) complex, composed of A, B and C subunits.

The protein localises to the mitochondrion. The enzyme catalyses L-glutamyl-tRNA(Gln) + L-glutamine + ATP + H2O = L-glutaminyl-tRNA(Gln) + L-glutamate + ADP + phosphate + H(+). Its function is as follows. Allows the formation of correctly charged Gln-tRNA(Gln) through the transamidation of misacylated Glu-tRNA(Gln) in the mitochondria. The reaction takes place in the presence of glutamine and ATP through an activated gamma-phospho-Glu-tRNA(Gln). This Culex quinquefasciatus (Southern house mosquito) protein is Glutamyl-tRNA(Gln) amidotransferase subunit C-3, mitochondrial.